The primary structure comprises 159 residues: MNEEYSLQDLLGQESELQFAFFNNQTAWKLGCQLKKIAEDNSTLVAIEVYAFSQTLFSYAMSGTQLDNQIWIKRKRQTVLRFGHSSYYIGQYNKAKNREFEQQVHINADDYCAHGGAFPIRIKKCGLVGVVTVSGLPQREDHQMVIDALTDLIKSVQKS.

The protein belongs to the UPF0303 family.

This chain is UPF0303 protein Ping_1243, found in Psychromonas ingrahamii (strain DSM 17664 / CCUG 51855 / 37).